The sequence spans 567 residues: DNA ligase B (567 aa).

The active-site N6-AMP-lysine intermediate is the lysine 126.

The protein belongs to the NAD-dependent DNA ligase family. LigB subfamily.

It catalyses the reaction NAD(+) + (deoxyribonucleotide)n-3'-hydroxyl + 5'-phospho-(deoxyribonucleotide)m = (deoxyribonucleotide)n+m + AMP + beta-nicotinamide D-nucleotide.. Catalyzes the formation of phosphodiester linkages between 5'-phosphoryl and 3'-hydroxyl groups in double-stranded DNA using NAD as a coenzyme and as the energy source for the reaction. This chain is DNA ligase B, found in Pseudomonas putida (strain W619).